A 209-amino-acid chain; its full sequence is Pyroglutamyl-peptidase 1 (209 aa).

Active-site residues include Glu-85, Cys-149, and His-168.

It belongs to the peptidase C15 family. Monomer.

It is found in the cytoplasm. It carries out the reaction Release of an N-terminal pyroglutamyl group from a polypeptide, the second amino acid generally not being Pro.. Functionally, removes 5-oxoproline from various penultimate amino acid residues except L-proline. The chain is Pyroglutamyl-peptidase 1 (Pgpep1) from Rattus norvegicus (Rat).